Here is an 864-residue protein sequence, read N- to C-terminus: Structure-specific endonuclease subunit SLX4 (864 aa).

Disordered stretches follow at residues Met1–Pro21, Leu49–Gly69, Thr91–Ala113, Ala161–His190, Leu289–Lys318, Thr346–Pro385, Ala413–Ser433, and Lys625–Ser767. A compositionally biased stretch (polar residues) spans Ser295 to Ser306. Basic residues predominate over residues Lys307–Lys318. Over residues Gln656–Val668 the composition is skewed to polar residues. The segment covering Val685–Lys695 has biased composition (low complexity). Polar residues predominate over residues Pro743–Ser767.

This sequence belongs to the SLX4 family. Forms a heterodimer with SLX1. Post-translationally, phosphorylated in response to DNA damage.

The protein resides in the nucleus. Functionally, regulatory subunit of the SLX1-SLX4 structure-specific endonuclease that resolves DNA secondary structures generated during DNA repair and recombination. Has endonuclease activity towards branched DNA substrates, introducing single-strand cuts in duplex DNA close to junctions with ss-DNA. The polypeptide is Structure-specific endonuclease subunit SLX4 (Paracoccidioides lutzii (strain ATCC MYA-826 / Pb01) (Paracoccidioides brasiliensis)).